A 227-amino-acid chain; its full sequence is NAD(P)H-hydrate epimerase (227 aa).

Residues 10–227 form the YjeF N-terminal domain; that stretch reads MRALETAAFN…GKIMVQYIGL (218 aa). 62-66 contributes to the (6S)-NADPHX binding site; it reads NNGGD. Residues Asn-63 and Asp-142 each coordinate K(+). (6S)-NADPHX is bound by residues 146–152 and Asp-176; that span reads GIGLNRP. Ser-179 contacts K(+).

It belongs to the NnrE/AIBP family. K(+) is required as a cofactor.

It catalyses the reaction (6R)-NADHX = (6S)-NADHX. The enzyme catalyses (6R)-NADPHX = (6S)-NADPHX. Its function is as follows. Catalyzes the epimerization of the S- and R-forms of NAD(P)HX, a damaged form of NAD(P)H that is a result of enzymatic or heat-dependent hydration. This is a prerequisite for the S-specific NAD(P)H-hydrate dehydratase to allow the repair of both epimers of NAD(P)HX. The chain is NAD(P)H-hydrate epimerase from Roseobacter litoralis (strain ATCC 49566 / DSM 6996 / JCM 21268 / NBRC 15278 / OCh 149).